A 59-amino-acid polypeptide reads, in one-letter code: Large ribosomal subunit protein uL30 (59 aa).

Belongs to the universal ribosomal protein uL30 family. Part of the 50S ribosomal subunit.

The chain is Large ribosomal subunit protein uL30 from Enterobacter sp. (strain 638).